A 446-amino-acid chain; its full sequence is ATP synthase subunit b-delta (446 aa).

The ATP synthase subunit b stretch occupies residues 1–168 (MSTFIGQLFG…PATADVDYPL (168 aa)). Residues 4–24 (FIGQLFGFAVIVYLVWRFIVP) form a helical membrane-spanning segment. The interval 169 to 446 (LAKMRSASRR…LAAAEARLPD (278 aa)) is ATP synthase subunit delta.

It in the N-terminal section; belongs to the ATPase B chain family. The protein in the C-terminal section; belongs to the ATPase delta chain family. F-type ATPases have 2 components, F(1) - the catalytic core - and F(0) - the membrane proton channel. F(1) has five subunits: alpha(3), beta(3), gamma(1), delta(1), epsilon(1). F(0) has three main subunits: a(1), b(2) and c(10-14). The alpha and beta chains form an alternating ring which encloses part of the gamma chain. F(1) is attached to F(0) by a central stalk formed by the gamma and epsilon chains, while a peripheral stalk is formed by the delta and b chains.

It localises to the cell membrane. In terms of biological role, f(1)F(0) ATP synthase produces ATP from ADP in the presence of a proton or sodium gradient. F-type ATPases consist of two structural domains, F(1) containing the extramembraneous catalytic core and F(0) containing the membrane proton channel, linked together by a central stalk and a peripheral stalk. During catalysis, ATP synthesis in the catalytic domain of F(1) is coupled via a rotary mechanism of the central stalk subunits to proton translocation. This fusion protein includes a component of the F(0) channel (subunit b) and of the F(1) subunit (subunit delta). Two copies of subunit b and one of delta together form the peripheral 'stator' stalk which links F(1) to F(0). This chain is ATP synthase subunit b-delta (atpFH), found in Mycobacterium tuberculosis (strain CDC 1551 / Oshkosh).